The following is a 190-amino-acid chain: Xanthine phosphoribosyltransferase (190 aa).

Xanthine contacts are provided by L20 and N27. 127–131 (AYGNA) contacts 5-phospho-alpha-D-ribose 1-diphosphate. K155 serves as a coordination point for xanthine.

Belongs to the purine/pyrimidine phosphoribosyltransferase family. Xpt subfamily. In terms of assembly, homodimer.

The protein localises to the cytoplasm. The enzyme catalyses XMP + diphosphate = xanthine + 5-phospho-alpha-D-ribose 1-diphosphate. It functions in the pathway purine metabolism; XMP biosynthesis via salvage pathway; XMP from xanthine: step 1/1. Converts the preformed base xanthine, a product of nucleic acid breakdown, to xanthosine 5'-monophosphate (XMP), so it can be reused for RNA or DNA synthesis. The sequence is that of Xanthine phosphoribosyltransferase from Bacteroides thetaiotaomicron (strain ATCC 29148 / DSM 2079 / JCM 5827 / CCUG 10774 / NCTC 10582 / VPI-5482 / E50).